The chain runs to 343 residues: L-threonine 3-dehydrogenase (343 aa).

Zn(2+) is bound at residue Cys-38. Catalysis depends on charge relay system residues Thr-40 and His-43. 6 residues coordinate Zn(2+): His-63, Glu-64, Cys-93, Cys-96, Cys-99, and Cys-107. NAD(+) is bound by residues Ile-175, Asp-195, Arg-200, 262–264 (LGI), and 286–287 (IY).

It belongs to the zinc-containing alcohol dehydrogenase family. As to quaternary structure, homotetramer. It depends on Zn(2+) as a cofactor.

Its subcellular location is the cytoplasm. The enzyme catalyses L-threonine + NAD(+) = (2S)-2-amino-3-oxobutanoate + NADH + H(+). It participates in amino-acid degradation; L-threonine degradation via oxydo-reductase pathway; glycine from L-threonine: step 1/2. Functionally, catalyzes the NAD(+)-dependent oxidation of L-threonine to 2-amino-3-ketobutyrate. The chain is L-threonine 3-dehydrogenase from Burkholderia mallei (strain NCTC 10247).